Here is a 285-residue protein sequence, read N- to C-terminus: Large ribosomal subunit protein uL2 (285 aa).

A disordered region spans residues 215-285; it reads GRSRHKGIRP…IIRNRKGEQY (71 aa). Positions 256 to 272 are enriched in basic residues; sequence WGKRHMGVKTRNMKKHS.

The protein belongs to the universal ribosomal protein uL2 family. In terms of assembly, part of the 50S ribosomal subunit. Forms a bridge to the 30S subunit in the 70S ribosome.

Functionally, one of the primary rRNA binding proteins. Required for association of the 30S and 50S subunits to form the 70S ribosome, for tRNA binding and peptide bond formation. It has been suggested to have peptidyltransferase activity; this is somewhat controversial. Makes several contacts with the 16S rRNA in the 70S ribosome. The sequence is that of Large ribosomal subunit protein uL2 from Mycoplasma genitalium (strain ATCC 33530 / DSM 19775 / NCTC 10195 / G37) (Mycoplasmoides genitalium).